A 190-amino-acid polypeptide reads, in one-letter code: GTP cyclohydrolase 1 (190 aa).

Zn(2+) contacts are provided by Cys80, His83, and Cys151.

The protein belongs to the GTP cyclohydrolase I family. As to quaternary structure, toroid-shaped homodecamer, composed of two pentamers of five dimers.

The catalysed reaction is GTP + H2O = 7,8-dihydroneopterin 3'-triphosphate + formate + H(+). It functions in the pathway cofactor biosynthesis; 7,8-dihydroneopterin triphosphate biosynthesis; 7,8-dihydroneopterin triphosphate from GTP: step 1/1. The polypeptide is GTP cyclohydrolase 1 (Rickettsia akari (strain Hartford)).